The sequence spans 455 residues: Bifunctional protein GlmU (455 aa).

A pyrophosphorylase region spans residues 1-232 (MASITGALIL…DPNLLGVNDP (232 aa)). UDP-N-acetyl-alpha-D-glucosamine is bound by residues 10–13 (LAAG), Lys-24, Gln-75, and 80–81 (GT). Asp-106 serves as a coordination point for Mg(2+). UDP-N-acetyl-alpha-D-glucosamine contacts are provided by Gly-141, Glu-155, Asn-172, and Asn-230. Residue Asn-230 participates in Mg(2+) binding. A linker region spans residues 233-253 (AELIRSEALVRARIALNWIEK). The tract at residues 254–455 (RVLIHAPETV…QTTLPRRRNS (202 aa)) is N-acetyltransferase. Residues Arg-336 and Lys-354 each coordinate UDP-N-acetyl-alpha-D-glucosamine. His-366 serves as the catalytic Proton acceptor. Residues Tyr-369 and Asn-380 each coordinate UDP-N-acetyl-alpha-D-glucosamine. Acetyl-CoA contacts are provided by residues Ala-383, 389 to 390 (NY), Ser-408, Ala-426, and Arg-443.

It in the N-terminal section; belongs to the N-acetylglucosamine-1-phosphate uridyltransferase family. The protein in the C-terminal section; belongs to the transferase hexapeptide repeat family. In terms of assembly, homotrimer. The cofactor is Mg(2+).

It localises to the cytoplasm. It catalyses the reaction alpha-D-glucosamine 1-phosphate + acetyl-CoA = N-acetyl-alpha-D-glucosamine 1-phosphate + CoA + H(+). The catalysed reaction is N-acetyl-alpha-D-glucosamine 1-phosphate + UTP + H(+) = UDP-N-acetyl-alpha-D-glucosamine + diphosphate. The protein operates within nucleotide-sugar biosynthesis; UDP-N-acetyl-alpha-D-glucosamine biosynthesis; N-acetyl-alpha-D-glucosamine 1-phosphate from alpha-D-glucosamine 6-phosphate (route II): step 2/2. Its pathway is nucleotide-sugar biosynthesis; UDP-N-acetyl-alpha-D-glucosamine biosynthesis; UDP-N-acetyl-alpha-D-glucosamine from N-acetyl-alpha-D-glucosamine 1-phosphate: step 1/1. It functions in the pathway bacterial outer membrane biogenesis; LPS lipid A biosynthesis. Catalyzes the last two sequential reactions in the de novo biosynthetic pathway for UDP-N-acetylglucosamine (UDP-GlcNAc). The C-terminal domain catalyzes the transfer of acetyl group from acetyl coenzyme A to glucosamine-1-phosphate (GlcN-1-P) to produce N-acetylglucosamine-1-phosphate (GlcNAc-1-P), which is converted into UDP-GlcNAc by the transfer of uridine 5-monophosphate (from uridine 5-triphosphate), a reaction catalyzed by the N-terminal domain. The protein is Bifunctional protein GlmU of Nitratidesulfovibrio vulgaris (strain DSM 19637 / Miyazaki F) (Desulfovibrio vulgaris).